The sequence spans 286 residues: ATP synthase gamma chain (286 aa).

Belongs to the ATPase gamma chain family. F-type ATPases have 2 components, CF(1) - the catalytic core - and CF(0) - the membrane proton channel. CF(1) has five subunits: alpha(3), beta(3), gamma(1), delta(1), epsilon(1). CF(0) has three main subunits: a, b and c.

It is found in the cell inner membrane. Produces ATP from ADP in the presence of a proton gradient across the membrane. The gamma chain is believed to be important in regulating ATPase activity and the flow of protons through the CF(0) complex. The sequence is that of ATP synthase gamma chain from Shewanella piezotolerans (strain WP3 / JCM 13877).